The sequence spans 229 residues: 23 kDa piroplasm membrane protein (229 aa).

Positions 1–19 (MNKYFKVFFFVLLTHALKS) are cleaved as a signal peptide. Residues 20-203 (SLIFGQATLQ…EKEETSKKKY (184 aa)) are Extracellular-facing. A helical transmembrane segment spans residues 204–224 (VLMVVVVVVFVVVASLVVFLV). Residues 225 to 229 (KFCLK) are Cytoplasmic-facing.

The protein localises to the membrane. In Theileria annulata, this protein is 23 kDa piroplasm membrane protein.